A 570-amino-acid chain; its full sequence is Urease subunit alpha (570 aa).

The Urease domain maps to 135–570 (GGLDIHIHFN…ELPLAKRYSL (436 aa)). 3 residues coordinate Ni(2+): H140, H142, and K219. K219 carries the N6-carboxylysine modification. H221 contributes to the substrate binding site. Positions 248 and 274 each coordinate Ni(2+). Catalysis depends on H322, which acts as the Proton donor. D362 is a Ni(2+) binding site.

The protein belongs to the metallo-dependent hydrolases superfamily. Urease alpha subunit family. In terms of assembly, heterotrimer of UreA (gamma), UreB (beta) and UreC (alpha) subunits. Three heterotrimers associate to form the active enzyme. Ni cation serves as cofactor. In terms of processing, carboxylation allows a single lysine to coordinate two nickel ions.

The protein localises to the cytoplasm. It carries out the reaction urea + 2 H2O + H(+) = hydrogencarbonate + 2 NH4(+). Its pathway is nitrogen metabolism; urea degradation; CO(2) and NH(3) from urea (urease route): step 1/1. This Haloquadratum walsbyi (strain DSM 16790 / HBSQ001) protein is Urease subunit alpha.